The primary structure comprises 242 residues: tRNA uridine(34) hydroxylase (242 aa).

The Rhodanese domain occupies 128-222; it reads DGREVVMLDT…YFEETGGPGY (95 aa). The Cysteine persulfide intermediate role is filled by Cys-182.

This sequence belongs to the TrhO family.

The catalysed reaction is uridine(34) in tRNA + AH2 + O2 = 5-hydroxyuridine(34) in tRNA + A + H2O. In terms of biological role, catalyzes oxygen-dependent 5-hydroxyuridine (ho5U) modification at position 34 in tRNAs. The chain is tRNA uridine(34) hydroxylase from Bordetella avium (strain 197N).